The sequence spans 521 residues: NAD(P)H-quinone oxidoreductase subunit 2 (521 aa).

14 helical membrane-spanning segments follow: residues 14–34, 42–62, 79–99, 109–129, 132–152, 167–187, 207–227, 241–261, 275–295, 303–323, 331–351, 375–395, 397–417, and 463–483; these read VILP…TDLI, LTPA…TLQW, LSIV…LLSI, LGEF…LSGA, LVTI…LTGY, LLIG…LYGL, LALL…ISAV, PTPI…ALAI, WHFV…VVAL, LLAY…IAGT, VYYL…VILF, LGLS…GFFG, LYLF…LALI, and AGLV…NPLF.

The protein belongs to the complex I subunit 2 family. As to quaternary structure, NDH-1 can be composed of about 15 different subunits; different subcomplexes with different compositions have been identified which probably have different functions.

The protein localises to the cellular thylakoid membrane. It catalyses the reaction a plastoquinone + NADH + (n+1) H(+)(in) = a plastoquinol + NAD(+) + n H(+)(out). The catalysed reaction is a plastoquinone + NADPH + (n+1) H(+)(in) = a plastoquinol + NADP(+) + n H(+)(out). In terms of biological role, NDH-1 shuttles electrons from an unknown electron donor, via FMN and iron-sulfur (Fe-S) centers, to quinones in the respiratory and/or the photosynthetic chain. The immediate electron acceptor for the enzyme in this species is believed to be plastoquinone. Couples the redox reaction to proton translocation, and thus conserves the redox energy in a proton gradient. Cyanobacterial NDH-1 also plays a role in inorganic carbon-concentration. The protein is NAD(P)H-quinone oxidoreductase subunit 2 of Synechococcus elongatus (strain ATCC 33912 / PCC 7942 / FACHB-805) (Anacystis nidulans R2).